The following is a 311-amino-acid chain: Pyrimidine-specific ribonucleoside hydrolase RihA (311 aa).

The active site involves His-240.

It belongs to the IUNH family. RihA subfamily.

Hydrolyzes cytidine or uridine to ribose and cytosine or uracil, respectively. The polypeptide is Pyrimidine-specific ribonucleoside hydrolase RihA (Salmonella enteritidis PT4 (strain P125109)).